The following is a 307-amino-acid chain: Dioxygenase swnH1 (307 aa).

The Fe cation site is built by His149, Asp151, and His227.

The protein belongs to the PhyH family. Homodimer. The cofactor is Fe cation.

Its pathway is mycotoxin biosynthesis. Functionally, dioxygenase; part of the gene cluster that mediates the biosynthesis of swainsonine (SW), a cytotoxic fungal alkaloid and a potential cancer therapy drug. Swainsonine production occurs via a multibranched pathway and is dispensable for fungal colonization of plants and infection of insect hosts. The first step of swainsonine biosynthesis is the production of the precursor pipecolic acid (PA) via conversion of L-lysine (Lys) to 1-piperideine-6-carboxylate (P6C) by the aminotransferase swnA, the latter being further reduced to PA by the reductase swnR. PA can be converted from lysine by both the SW biosynthetic cluster and the unclustered genes such as lysine cyclodeaminase. The PKS-NRPS hybrid synthetase swnK uptakes and condensates PA and malonyl-CoA with and without skipping of the ketoreductase (KR) domain in order to produce 3 intermediates, 1-oxoindolizidine, (1S)-1-hydroxyindolizin, and (1R)-1-hydroxyindolizine; with the transisomer (1S)-1-hydroxyindolizin being predominant. The terminal thioester reductase (TE) domain of swnK is involved in reduction of the thioester bond to release the intermediate aldehydes. The oxidoreductase swnN could contribute to the reduction of 1-oxoindolizidine to (1S)-1-hydroxyindolizin and (1R)-1-hydroxyindolizine, contributing to the major route of SW production. The dioxygenase swnH2 would be responsible for the oxidization of (1R)-1-hydroxyindolizine into (1R,2S)-1,2-dihydroxyindolizine and of (1S)-1-hydroxyindolizin to yield both (1R,2S)-1,2-dihydroxyindolizine and (1S,2S)-1,2-dihydroxyindolizine. The dioxygenase swnH1 then performs the conversion of the 1,2-dihydroxyindolizine epimers to SW. The chain is Dioxygenase swnH1 from Metarhizium robertsii (strain ARSEF 23 / ATCC MYA-3075) (Metarhizium anisopliae (strain ARSEF 23)).